Consider the following 1312-residue polypeptide: AT-rich interactive domain-containing protein 4B (1312 aa).

2 disordered regions span residues 124-166 (PLTN…EDDR) and 266-306 (KTEL…EPFP). 3 positions are modified to phosphoserine: Ser276, Ser295, and Ser296. The segment covering 277–305 (EAEEEEEEEDDEKEKEDNSSEEEEEIEPF) has biased composition (acidic residues). Residues 306–398 (PEERENFLQQ…YLYGFEEYCR (93 aa)) form the ARID domain. Residues Lys429, Lys440, and Lys462 each participate in a glycyl lysine isopeptide (Lys-Gly) (interchain with G-Cter in SUMO2) cross-link. 5 disordered regions span residues 458 to 577 (EIER…KVQV), 635 to 680 (IKHR…EMVS), 708 to 894 (QASE…TTGF), 909 to 1212 (LNNS…NRLP), and 1252 to 1288 (SEVA…SITA). Residues 465-473 (IKPSLGSKK) are antigenic epitope. Ser483 carries the phosphoserine modification. The segment covering 483 to 496 (SDQEKEVNIKKPED) has biased composition (basic and acidic residues). Lys517 participates in a covalent cross-link: Glycyl lysine isopeptide (Lys-Gly) (interchain with G-Cter in SUMO2). Positions 532 to 567 (NKEEDEDDEEAEEEEEEEEEEEDEDDDDNNEEEEFE) are enriched in acidic residues. The region spanning 572-624 (GMKVQVRYGRGKNQKMYEASIKDSDVEGGEVLYLVHYCGWNVRYDEWIKADKI) is the Tudor-knot domain. The span at 643-656 (NKLDKEKDKDEKYS) shows a compositional bias: basic and acidic residues. Ser666, Ser675, and Ser717 each carry phosphoserine. 2 stretches are compositionally biased toward basic and acidic residues: residues 722-754 (ERGA…KEEQ) and 778-787 (SPERLRKDIE). Positions 728–754 (MDNNGKEESKIDHLTNNRNDLISKEEQ) form a coiled coil. Lys751 participates in a covalent cross-link: Glycyl lysine isopeptide (Lys-Gly) (interchain with G-Cter in SUMO2). 2 positions are modified to phosphoserine: Ser778 and Ser790. The segment covering 788–799 (VLSEDTDYEEDE) has biased composition (acidic residues). Phosphothreonine is present on Thr793. Composition is skewed to basic and acidic residues over residues 807–816 (VKKDTTDKSS), 828–852 (CNTE…KESL), 909–927 (LNNS…RKDV), and 995–1010 (KPIE…RKAE). Ser1014 is subject to Phosphoserine. Thr1026 carries the phosphothreonine modification. Residues 1028–1037 (ESPSSVTVTE) show a composition bias toward low complexity. Ser1029 is subject to Phosphoserine. Positions 1038–1047 (GSRQQSSVTV) are enriched in polar residues. A compositionally biased stretch (basic and acidic residues) spans 1056-1065 (EEVRSIKSET). The segment covering 1087 to 1101 (SSPAGFDASVSSSSS) has biased composition (low complexity). The segment at 1130–1137 (KKQKRSHK) is antigenic epitope. Residues 1130 to 1148 (KKQKRSHKATVVNNKKKGK) are compositionally biased toward basic residues. Thr1150 is subject to Phosphothreonine. Residues Ser1152, Ser1153, Ser1155, and Ser1159 each carry the phosphoserine modification. A compositionally biased stretch (polar residues) spans 1162 to 1191 (ESITKSQPVKSVSTGMKSHSTKSPARTQSP). The span at 1196 to 1208 (KNGDKDPDLKEPS) shows a compositional bias: basic and acidic residues. Residues 1231–1270 (ERITILQEKLQEIRKHYLSLKSEVASIDRRRKRLKKKERE) are a coiled coil. Residues 1272-1288 (AATSSSSSSPSSSSITA) show a composition bias toward low complexity.

Component of a Sin3A corepressor complex consisting of SIN3A, SAP130, SUDS3/SAP45, SAP180, HDAC1 and HDAC2. Interacts with ARID4A. Interacts with AR. Highly expressed in the testis and in breast, lung, colon, pancreatic and ovarian cancers. Expressed at low levels in the thymus, prostate and ovary.

The protein localises to the nucleus. The protein resides in the cytoplasm. Its function is as follows. Acts as a transcriptional repressor. May function in the assembly and/or enzymatic activity of the Sin3A corepressor complex or in mediating interactions between the complex and other regulatory complexes. Plays a role in the regulation of epigenetic modifications at the PWS/AS imprinting center near the SNRPN promoter, where it might function as part of a complex with RB1 and ARID4A. Involved in spermatogenesis, together with ARID4A, where it functions as a transcriptional coactivator for AR (androgen receptor) and enhances expression of genes required for sperm maturation. Regulates expression of the tight junction protein CLDN3 in the testis, which is important for integrity of the blood-testis barrier. Plays a role in myeloid homeostasis where it regulates the histone methylation state of bone marrow cells and expression of various genes involved in hematopoiesis. May function as a leukemia suppressor. This chain is AT-rich interactive domain-containing protein 4B (ARID4B), found in Homo sapiens (Human).